The sequence spans 90 residues: Putative membrane protein insertion efficiency factor (90 aa).

Belongs to the UPF0161 family.

The protein localises to the cell inner membrane. In terms of biological role, could be involved in insertion of integral membrane proteins into the membrane. The chain is Putative membrane protein insertion efficiency factor from Bordetella bronchiseptica (strain ATCC BAA-588 / NCTC 13252 / RB50) (Alcaligenes bronchisepticus).